An 811-amino-acid chain; its full sequence is Vacuolar protein sorting-associated protein 70 (811 aa).

Positions 1–21 are enriched in basic and acidic residues; the sequence is MRMIQRERKREKEEGQLKERT. Residues 1 to 63 are disordered; sequence MRMIQRERKR…MNDSFTLTSR (63 aa). A glycan (N-linked (GlcNAc...) asparagine) is linked at asparagine 55. A helical membrane pass occupies residues 90–110; the sequence is FMYLILASLLLYMGFVAAFAP. N-linked (GlcNAc...) asparagine glycosylation occurs at asparagine 237. Residues 334 to 367 form a disordered region; that stretch reads FSDTPGDPTTPGYPSKDSDTEHMSPVGRVPRIPS. Residues 336-345 are compositionally biased toward low complexity; the sequence is DTPGDPTTPG. Zn(2+) is bound by residues histidine 445, aspartate 456, and aspartate 522. Asparagine 568 and asparagine 599 each carry an N-linked (GlcNAc...) asparagine glycan. A Zn(2+)-binding site is contributed by histidine 607. Asparagine 670 carries N-linked (GlcNAc...) asparagine glycosylation.

It belongs to the peptidase M28 family. M28B subfamily. It depends on Zn(2+) as a cofactor.

Its subcellular location is the membrane. In terms of biological role, involved in vacuolar protein sorting. The sequence is that of Vacuolar protein sorting-associated protein 70 (VPS70) from Saccharomyces cerevisiae (strain ATCC 204508 / S288c) (Baker's yeast).